A 520-amino-acid polypeptide reads, in one-letter code: Type I restriction enzyme EcoprrI methylase subunit (520 aa).

Residues 198–203 (EFFTPQ), 230–232 (SGS), and E254 contribute to the S-adenosyl-L-methionine site.

Belongs to the N(4)/N(6)-methyltransferase family. The type I restriction/modification system is composed of three polypeptides R, M and S; the restriction enzyme has stoichiometry R(2)M(2)S(1) while the methyltransferase is M(2)S(1).

It catalyses the reaction a 2'-deoxyadenosine in DNA + S-adenosyl-L-methionine = an N(6)-methyl-2'-deoxyadenosine in DNA + S-adenosyl-L-homocysteine + H(+). Functionally, the subtype gamma methyltransferase (M) subunit of a type I restriction enzyme. The M and S subunits together form a methyltransferase (MTase) that methylates two adenine residues of the sequence 5'-CCAN(7)ATGC-3'. In the presence of the R subunit the complex can also act as an endonuclease, binding to the same target sequence but cutting the DNA some distance from this site. Whether the DNA is cut or modified depends on the methylation state of the target sequence. When the target site is unmodified, the DNA is cut. When the target site is hemimethylated, the complex acts as a maintenance MTase modifying the DNA so that both strands become methylated. After locating a non-methylated recognition site, the enzyme complex serves as a molecular motor that translocates DNA in an ATP-dependent manner until a collision occurs that triggers cleavage. The sequence is that of Type I restriction enzyme EcoprrI methylase subunit from Escherichia coli.